Consider the following 164-residue polypeptide: UPF0114 protein KPN78578_33570 (164 aa).

The next 4 membrane-spanning stretches (helical) occupy residues 15–35 (LLAP…IKFF), 53–73 (MILT…LVMV), 109–126 (VAAS…RVFM), and 136–156 (LMWY…MGYL).

It belongs to the UPF0114 family.

It localises to the cell membrane. The protein is UPF0114 protein KPN78578_33570 of Klebsiella pneumoniae subsp. pneumoniae (strain ATCC 700721 / MGH 78578).